A 27-amino-acid chain; its full sequence is Superoxide dismutase [Mn] (27 aa).

It belongs to the iron/manganese superoxide dismutase family. In terms of assembly, homodimer. Requires Mn(2+) as cofactor.

It carries out the reaction 2 superoxide + 2 H(+) = H2O2 + O2. Functionally, destroys superoxide anion radicals which are normally produced within the cells and which are toxic to biological systems. In Desulfovibrio desulfuricans, this protein is Superoxide dismutase [Mn] (sodA).